The primary structure comprises 763 residues: Phosphoglycerol transferase I (763 aa).

The next 4 membrane-spanning stretches (helical) occupy residues Met-1–Ala-21, Asn-24–Thr-44, Ile-77–Ile-97, and Val-108–Phe-128.

This sequence belongs to the OpgB family.

The protein localises to the cell inner membrane. The enzyme catalyses a phosphatidylglycerol + a membrane-derived-oligosaccharide D-glucose = a 1,2-diacyl-sn-glycerol + a membrane-derived-oligosaccharide 6-(glycerophospho)-D-glucose.. It participates in glycan metabolism; osmoregulated periplasmic glucan (OPG) biosynthesis. In terms of biological role, transfers a phosphoglycerol residue from phosphatidylglycerol to the membrane-bound nascent glucan backbones. The sequence is that of Phosphoglycerol transferase I from Salmonella arizonae (strain ATCC BAA-731 / CDC346-86 / RSK2980).